A 1297-amino-acid polypeptide reads, in one-letter code: Regulator of V-ATPase in vacuolar membrane protein 1 (1297 aa).

Composition is skewed to basic and acidic residues over residues 1161–1171 and 1260–1269; these read DQEIHENKDSQ and AVEKTHDSPK. Disordered regions lie at residues 1161–1182 and 1260–1297; these read DQEI…VRNK and AVEK…FSFE.

As to quaternary structure, component of the RAVE complex composed of rav1, rav2 and skp1. Interacts with vam2.

The protein resides in the cytoplasm. Its subcellular location is the nucleus. It is found in the endomembrane system. Functionally, component of the RAVE complex which is required for stable assembly of the vacuolar ATPase complex V-ATPase. The chain is Regulator of V-ATPase in vacuolar membrane protein 1 (rav1) from Schizosaccharomyces pombe (strain 972 / ATCC 24843) (Fission yeast).